A 276-amino-acid chain; its full sequence is Rho-related protein racO (276 aa).

11-18 (GDGLIGKT) serves as a coordination point for GTP. The Effector region signature appears at 34–42 (YSSFDSEYL). GTP contacts are provided by residues 60–64 (ENDGF) and 124–127 (IKTD). The tract at residues 199–276 (FKNNNNNNNY…NKTTNKCKIS (78 aa)) is disordered. The span at 200–270 (KNNNNNNNYN…SYKNHNNKTT (71 aa)) shows a compositional bias: low complexity. The residue at position 273 (cysteine 273) is a Cysteine methyl ester. Cysteine 273 is lipidated: S-geranylgeranyl cysteine. A propeptide spans 274 to 276 (KIS) (removed in mature form).

It belongs to the small GTPase superfamily. Rho family.

Its subcellular location is the cell membrane. This Dictyostelium discoideum (Social amoeba) protein is Rho-related protein racO (racO).